A 930-amino-acid chain; its full sequence is Translation initiation factor IF-2 (930 aa).

The segment covering 50–67 has biased composition (low complexity); sequence FKPAAAPKVEAKPAAPKV. Disordered regions lie at residues 50–195 and 260–346; these read FKPA…PRID and EVVP…HELP. 2 stretches are compositionally biased toward basic and acidic residues: residues 68-90 and 110-125; these read SAEK…EAKP and FKAE…AERR. A compositionally biased stretch (low complexity) spans 129 to 141; that stretch reads KGNNRDQQQNGNR. 2 stretches are compositionally biased toward basic and acidic residues: residues 157-167 and 262-295; these read RDNRRFNDQAK and VPEK…DGPR. The segment covering 309–318 has biased composition (low complexity); that stretch reads NQKNSNWNNN. The span at 337–346 shows a compositional bias: basic and acidic residues; the sequence is VTERKFHELP. The tr-type G domain maps to 432–599; sequence ERPPVVTIMG…TVLLVAEIQE (168 aa). The segment at 441–448 is G1; it reads GHVDHGKT. 441–448 contacts GTP; it reads GHVDHGKT. Positions 466–470 are G2; that stretch reads GITQH. The interval 487–490 is G3; that stretch reads DTPG. GTP-binding positions include 487–491 and 541–544; these read DTPGH and NKID. Residues 541 to 544 form a G4 region; sequence NKID. The interval 577 to 579 is G5; the sequence is SAK.

Belongs to the TRAFAC class translation factor GTPase superfamily. Classic translation factor GTPase family. IF-2 subfamily.

It is found in the cytoplasm. Functionally, one of the essential components for the initiation of protein synthesis. Protects formylmethionyl-tRNA from spontaneous hydrolysis and promotes its binding to the 30S ribosomal subunits. Also involved in the hydrolysis of GTP during the formation of the 70S ribosomal complex. This Streptococcus pneumoniae (strain Hungary19A-6) protein is Translation initiation factor IF-2.